A 338-amino-acid polypeptide reads, in one-letter code: Ketol-acid reductoisomerase (NADP(+)) (338 aa).

The KARI N-terminal Rossmann domain maps to 1–181 (MNVFYDKDAD…GGGRAGIIET (181 aa)). Residues 24–27 (YGSQ), R47, and S52 each bind NADP(+). H107 is an active-site residue. An NADP(+)-binding site is contributed by G133. Residues 182-327 (NFREETETDL…AKLRAMMPWI (146 aa)) form the KARI C-terminal knotted domain. D190, E194, E226, and E230 together coordinate Mg(2+). S251 serves as a coordination point for substrate.

This sequence belongs to the ketol-acid reductoisomerase family. Mg(2+) is required as a cofactor.

The catalysed reaction is (2R)-2,3-dihydroxy-3-methylbutanoate + NADP(+) = (2S)-2-acetolactate + NADPH + H(+). The enzyme catalyses (2R,3R)-2,3-dihydroxy-3-methylpentanoate + NADP(+) = (S)-2-ethyl-2-hydroxy-3-oxobutanoate + NADPH + H(+). It participates in amino-acid biosynthesis; L-isoleucine biosynthesis; L-isoleucine from 2-oxobutanoate: step 2/4. It functions in the pathway amino-acid biosynthesis; L-valine biosynthesis; L-valine from pyruvate: step 2/4. In terms of biological role, involved in the biosynthesis of branched-chain amino acids (BCAA). Catalyzes an alkyl-migration followed by a ketol-acid reduction of (S)-2-acetolactate (S2AL) to yield (R)-2,3-dihydroxy-isovalerate. In the isomerase reaction, S2AL is rearranged via a Mg-dependent methyl migration to produce 3-hydroxy-3-methyl-2-ketobutyrate (HMKB). In the reductase reaction, this 2-ketoacid undergoes a metal-dependent reduction by NADPH to yield (R)-2,3-dihydroxy-isovalerate. The sequence is that of Ketol-acid reductoisomerase (NADP(+)) from Burkholderia cenocepacia (strain ATCC BAA-245 / DSM 16553 / LMG 16656 / NCTC 13227 / J2315 / CF5610) (Burkholderia cepacia (strain J2315)).